Reading from the N-terminus, the 146-residue chain is Angiogenin (146 aa).

An N-terminal signal peptide occupies residues 1-24; that stretch reads MVMGLHLLFLVFILGLGLTPPTLA. Gln25 carries the pyrrolidone carboxylic acid modification. His37 functions as the Proton acceptor in the catalytic mechanism. Intrachain disulfides connect Cys50–Cys105, Cys63–Cys116, and Cys81–Cys131. Positions 55 to 59 match the Nucleolar localization signal motif; sequence RLRNM. Positions 105 and 127 each coordinate tRNA. His138 serves as the catalytic Proton donor.

Belongs to the pancreatic ribonuclease family. Homodimer. Interacts with RNH1; inhibiting ANG ribonuclease activity. Interacts with PCNA.

Its subcellular location is the secreted. It localises to the nucleus. The protein localises to the nucleolus. The protein resides in the cytoplasm. It is found in the stress granule. Its activity is regulated as follows. Has weak tRNA ribonuclease activity by itself due to partial autoinhibition by its C-terminus, which folds into a short alpha-helix that partially occludes the substrate-binding site. In absence of stress, the ribonuclease activity is inhibited by RNH1 in the cytoplasm. In response to stress, dissociates from RNH1 in the cytoplasm and associates with cytoplasmic ribosomes with vacant A-sites: ribosomes directly activate the tRNA ribonuclease activity of ANG by refolding the C-terminal alpha-helix. In response to stress, the angiogenic activity of ANG is inhibited by RNH1 in the nucleus. Its function is as follows. Secreted ribonuclease that can either promote or restrict cell proliferation of target cells, depending on the context. Endocytosed in target cells via its receptor PLXNB2 and translocates to the cytoplasm or nucleus. Under stress conditions, localizes to the cytoplasm and promotes the assembly of stress granules (SGs): specifically cleaves a subset of tRNAs within anticodon loops to produce tRNA-derived stress-induced fragments (tiRNAs), resulting in translation repression and inhibition of cell proliferation. tiRNas also prevent formation of apoptosome, thereby promoting cell survival. Preferentially cleaves RNAs between a pyrimidine and an adenosine residue, suggesting that it cleaves the anticodon loop of tRNA(Ala) (32-UUAGCAU-38) after positions 33 and 36. Cleaves a subset of tRNAs, including tRNA(Ala), tRNA(Glu), tRNA(Gly), tRNA(Lys), tRNA(Val), tRNA(His), tRNA(Asp) and tRNA(Sec). Under growth conditions and in differentiated cells, translocates to the nucleus and stimulates ribosomal RNA (rRNA) transcription, including that containing the initiation site sequences of 45S rRNA, thereby promoting cell growth and proliferation. Angiogenin induces vascularization of normal and malignant tissues via its ability to promote rRNA transcription. Involved in hematopoietic stem and progenitor cell (HSPC) growth and survival by promoting rRNA transcription in growth conditions and inhibiting translation in response to stress, respectively. Mediates the crosstalk between myeloid and intestinal epithelial cells to protect the intestinal epithelial barrier integrity: secreted by myeloid cells and promotes intestinal epithelial cells proliferation and survival. Also mediates osteoclast-endothelial cell crosstalk in growing bone: produced by osteoclasts and protects the neighboring vascular cells against senescence by promoting rRNA transcription. The chain is Angiogenin (ANG) from Saguinus oedipus (Cotton-top tamarin).